We begin with the raw amino-acid sequence, 306 residues long: Glutathione transport system permease protein GsiC (306 aa).

Residues 1–8 lie on the Cytoplasmic side of the membrane; sequence MLNYVLKR. The helical transmembrane segment at 9–29 threads the bilayer; sequence LLGLIPTLLIVAVLVFLFVHL. At 30–102 the chain is on the periplasmic side; the sequence is LPGDPARLIA…SRFLPTLWLT (73 aa). An ABC transmembrane type-1 domain is found at 95–292; the sequence is FLPTLWLTIT…LEFILINLVV (198 aa). The chain crosses the membrane as a helical span at residues 103–123; that stretch reads ITSMIWAVLFGMAIGIAAAVW. Residues 124–134 lie on the Cytoplasmic side of the membrane; it reads RNRWPDRLGMT. Residues 135 to 155 form a helical membrane-spanning segment; that stretch reads LAVTGISFPAFALGMLLMQIF. Over 156-168 the chain is Periplasmic; that stretch reads SVDLGWLPTVGAD. A helical transmembrane segment spans residues 169 to 189; sequence SWQHYILPSLTLGAAVASVMA. At 190-228 the chain is on the cytoplasmic side; that stretch reads RFTRSSFVDVLSEDYMRTARAKGVSETWVVLKHGLRNAM. A helical membrane pass occupies residues 229–249; it reads IPVVTMMGLQFGFLLGGSIVV. Topologically, residues 250–278 are periplasmic; that stretch reads EKVFNWPGLGRLLVDSVDMRDYPVIQAEV. A helical membrane pass occupies residues 279 to 299; it reads LLFSLEFILINLVVDVLYAAI. Residues 300-306 lie on the Cytoplasmic side of the membrane; that stretch reads NPAIRYK.

This sequence belongs to the binding-protein-dependent transport system permease family. The complex is composed of two ATP-binding proteins (GsiA), two transmembrane proteins (GsiC and GsiD) and a solute-binding protein (GsiB).

Its subcellular location is the cell inner membrane. Its function is as follows. Part of the ABC transporter complex GsiABCD involved in glutathione import. Probably responsible for the translocation of the substrate across the membrane. The polypeptide is Glutathione transport system permease protein GsiC (Salmonella typhimurium (strain LT2 / SGSC1412 / ATCC 700720)).